The primary structure comprises 264 residues: Thiazole synthase (264 aa).

Lys106 acts as the Schiff-base intermediate with DXP in catalysis. Residues Gly167, 193–194, and 215–216 each bind 1-deoxy-D-xylulose 5-phosphate; these read AG and NS.

This sequence belongs to the ThiG family. As to quaternary structure, homotetramer. Forms heterodimers with either ThiH or ThiS.

The protein resides in the cytoplasm. The catalysed reaction is [ThiS sulfur-carrier protein]-C-terminal-Gly-aminoethanethioate + 2-iminoacetate + 1-deoxy-D-xylulose 5-phosphate = [ThiS sulfur-carrier protein]-C-terminal Gly-Gly + 2-[(2R,5Z)-2-carboxy-4-methylthiazol-5(2H)-ylidene]ethyl phosphate + 2 H2O + H(+). It participates in cofactor biosynthesis; thiamine diphosphate biosynthesis. In terms of biological role, catalyzes the rearrangement of 1-deoxy-D-xylulose 5-phosphate (DXP) to produce the thiazole phosphate moiety of thiamine. Sulfur is provided by the thiocarboxylate moiety of the carrier protein ThiS. In vitro, sulfur can be provided by H(2)S. The protein is Thiazole synthase of Pseudomonas fluorescens (strain SBW25).